Reading from the N-terminus, the 343-residue chain is GTPase Obg (343 aa).

The region spanning 1-159 (MKFLDEAKVY…HWLWLRLKLI (159 aa)) is the Obg domain. The 168-residue stretch at 160–327 (ADAGLVGLPN…ALRALLAAMD (168 aa)) folds into the OBG-type G domain. Residues 166–173 (GLPNAGKS), 191–195 (FTTLH), 212–215 (DIPG), 279–282 (SKAD), and 308–310 (SAA) each bind GTP. 2 residues coordinate Mg(2+): Ser173 and Thr193.

The protein belongs to the TRAFAC class OBG-HflX-like GTPase superfamily. OBG GTPase family. As to quaternary structure, monomer. It depends on Mg(2+) as a cofactor.

The protein resides in the cytoplasm. Its function is as follows. An essential GTPase which binds GTP, GDP and possibly (p)ppGpp with moderate affinity, with high nucleotide exchange rates and a fairly low GTP hydrolysis rate. Plays a role in control of the cell cycle, stress response, ribosome biogenesis and in those bacteria that undergo differentiation, in morphogenesis control. In Methylobacterium sp. (strain 4-46), this protein is GTPase Obg.